We begin with the raw amino-acid sequence, 333 residues long: Adenosine deaminase (333 aa).

Zn(2+) is bound by residues His-12 and His-14. Substrate contacts are provided by His-14, Asp-16, and Gly-170. His-197 contributes to the Zn(2+) binding site. Glu-200 (proton donor) is an active-site residue. Asp-278 is a Zn(2+) binding site. Residue Asp-279 coordinates substrate.

Belongs to the metallo-dependent hydrolases superfamily. Adenosine and AMP deaminases family. Adenosine deaminase subfamily. It depends on Zn(2+) as a cofactor.

The enzyme catalyses adenosine + H2O + H(+) = inosine + NH4(+). The catalysed reaction is 2'-deoxyadenosine + H2O + H(+) = 2'-deoxyinosine + NH4(+). Its function is as follows. Catalyzes the hydrolytic deamination of adenosine and 2-deoxyadenosine. This chain is Adenosine deaminase, found in Salmonella paratyphi C (strain RKS4594).